Consider the following 129-residue polypeptide: uncharacterized protein (129 aa).

Lysine 121 participates in a covalent cross-link: Isoglutamyl lysine isopeptide (Lys-Gln) (interchain with Q-Cter in protein Pup).

This is an uncharacterized protein from Mycolicibacterium smegmatis (strain ATCC 700084 / mc(2)155) (Mycobacterium smegmatis).